A 422-amino-acid chain; its full sequence is Target of rapamycin complex 2 subunit bit61 (422 aa).

Polar residues predominate over residues Val-48–Asn-69. Residues Val-48–Lys-101 are disordered. Phosphoserine occurs at positions 109, 132, and 201.

The protein belongs to the BIT61 family. The target of rapamycin complex 2 (TORC2) is composed of at least bit61, pop3/wat1, sin1, ste20 and tor1. In terms of processing, either Thr-23, Thr-25 or Ser-26 and Ser-78 or Ser-79 are phosphorylated as well.

Its subcellular location is the cytoplasm. It localises to the nucleus. Component of TORC2, which regulates multiple cellular processes to control cell growth in response to environmental signals. TORC2 is required for cell survival under various stress conditions. TORC2 positively controls G1 cell-cycle arrest, sexual development and amino acid uptake. Positively regulates amino acid uptake through the control of expression of amino acid permeases. The sequence is that of Target of rapamycin complex 2 subunit bit61 from Schizosaccharomyces pombe (strain 972 / ATCC 24843) (Fission yeast).